Here is a 205-residue protein sequence, read N- to C-terminus: Spermatogenesis-associated protein 24 (205 aa).

Residues 17-166 (LAFDQLRDVI…QQRQSFRNHM (150 aa)) are a coiled coil. A required for interaction with CBX5 and TBPL1 region spans residues 138-185 (EDILNGKENEIKELQQVISQQRQSFRNHMSDFRIQKQQETYMAQVLDQ). Residues 182 to 205 (VLDQKHKKTSGTRRARSRQCSREK) are disordered. A compositionally biased stretch (basic residues) spans 186 to 205 (KHKKTSGTRRARSRQCSREK).

Belongs to the SPATA24 family. As to quaternary structure, homodimer. Interacts with CBX3, CBX5, GMNN, GTF2B, TBPL1 and the polycomb proteins PHCF2, RNF2 and SCMH1 but not with CBX1 or PCGF2. In terms of tissue distribution, highly expressed in the testis and is mainly localized in the spermatids. Also expressed in the lung, heart, spleen and epididymis.

The protein resides in the cytoplasm. The protein localises to the nucleus. It is found in the nucleolus. It localises to the nucleoplasm. Binds DNA with high affinity but does not bind to TATA boxes. Synergises with GMNN and TBP in activation of TATA box-containing promoters and with GMNN and TBPL1 in activation of the NF1 TATA-less promoter. May play a role in cytoplasm movement and removal during spermiogenesis. In Rattus norvegicus (Rat), this protein is Spermatogenesis-associated protein 24 (Spata24).